A 1442-amino-acid chain; its full sequence is Chitin synthase regulator SKT5 (1442 aa).

Disordered stretches follow at residues 1–54 (MTHP…SPTL) and 72–117 (LALK…RHLQ). Residues 12 to 25 (NGKEPEKEEPRCVH) are compositionally biased toward basic and acidic residues. The span at 39-53 (KSSSAITNENVSSPT) shows a compositional bias: polar residues. A compositionally biased stretch (basic and acidic residues) spans 75–99 (KEPENGKNKHPDSEQDDGDMKEQRS). 7 Sel1-like repeats span residues 198-236 (VESQYLAGDCCMNGYGMSKGRPDLGLAYSYFVQAGKRGH), 237-272 (PDAAYRAGTCYEKGWGCRRDPAKAVQFYKMAASRKH), 273-309 (PGAQYRLGTAELNGELGLKRLAREGVKWLKRSAENAT), 313-350 (PHALHELALLHEKGIYNVLFVDNEYSCELLAQAVEMGY), 351-387 (APSAYKLGVNYEYGRMGCPQDSGLSIHMYNIAAQQNH), 388-425 (KEACFALTSWYLVGVPGILPQSDTEAYLWAKRAAEQGL), and 426-461 (AKAEYACGYFCENGIGTPRDLGEAKGWYQRAVEHGD). Positions 550 to 1402 (EKPKTATPTS…FSTPDSSSSK (853 aa)) are disordered. The segment covering 605-617 (PKPPTPPPPPPPE) has biased composition (pro residues). A compositionally biased stretch (basic residues) spans 633–648 (FKSRLLRLGKMGKIRK). Positions 747-758 (GPSSAAGADGAP) are enriched in low complexity. Composition is skewed to basic and acidic residues over residues 762–804 (GEPK…KSEK), 821–840 (GSDKPGSEDKKNQEVPKPSD), and 859–875 (RPDEKNSSLVERSKDSE). Over residues 876-891 (STSPSSPKPTTGSAEP) the composition is skewed to low complexity. Composition is skewed to pro residues over residues 964–977 (PFPPGARPGMPPNA), 1139–1158 (RPGPRPFSPTFPSPAGPSRP), and 1200–1220 (AMQPGRPPSPSSPFGRPPTGP). Polar residues predominate over residues 1232 to 1243 (PSQSSMHQSGNG). Over residues 1271–1282 (PRPPRPTSPPPF) the composition is skewed to pro residues. Low complexity predominate over residues 1295-1305 (RGVMPPGSGPS). Pro residues-rich tracts occupy residues 1306–1322 (MRPPQPPAIIPPPPRSP) and 1371–1386 (DRPPFAPPTHVTPPKT). A compositionally biased stretch (polar residues) spans 1392–1402 (GFSTPDSSSSK).

Belongs to the SKT5 family.

Its subcellular location is the cell membrane. Its function is as follows. Activator of the chitin synthase CHS3 which polymerizes chitin, a structural polymer of the fungal cell wall. The polypeptide is Chitin synthase regulator SKT5 (Malassezia restricta (strain ATCC 96810 / NBRC 103918 / CBS 7877) (Seborrheic dermatitis infection agent)).